A 496-amino-acid chain; its full sequence is Aldehyde dehydrogenase 1A1 (496 aa).

N6-acetyllysine occurs at positions 86 and 123. Residues 162–165, 188–191, 221–222, and 241–242 contribute to the NAD(+) site; these read IPWN, KPAE, GP, and GS. Lysine 247 is subject to N6-acetyllysine. The active-site Proton acceptor is the glutamate 264. 264–266 provides a ligand contact to NAD(+); the sequence is ELG. Catalysis depends on cysteine 298, which acts as the Nucleophile. The interval 331–496 is mediates interaction with PRMT3; the sequence is LAPEVNQGPQ…VTVKISQKNS (166 aa). NAD(+) is bound at residue 344–348; it reads EQYNK. Residues lysine 348 and lysine 362 each carry the N6-acetyllysine modification. Residue 395 to 397 participates in NAD(+) binding; that stretch reads EIF. Lysine 405 carries the N6-acetyllysine modification. Phosphoserine is present on serine 408. N6-acetyllysine is present on residues lysine 414, lysine 430, and lysine 490.

This sequence belongs to the aldehyde dehydrogenase family. Homotetramer. Interacts with PRMT3; the interaction is direct, inhibits ALDH1A1 aldehyde dehydrogenase activity and is independent of the methyltransferase activity of PRMT3. In terms of processing, the N-terminus is blocked most probably by acetylation.

The protein resides in the cytoplasm. It is found in the cytosol. It localises to the cell projection. Its subcellular location is the axon. It catalyses the reaction an aldehyde + NAD(+) + H2O = a carboxylate + NADH + 2 H(+). The enzyme catalyses all-trans-retinal + NAD(+) + H2O = all-trans-retinoate + NADH + 2 H(+). The catalysed reaction is 9-cis-retinal + NAD(+) + H2O = 9-cis-retinoate + NADH + 2 H(+). It carries out the reaction 11-cis-retinal + NAD(+) + H2O = 11-cis-retinoate + NADH + 2 H(+). It catalyses the reaction 13-cis-retinal + NAD(+) + H2O = 13-cis-retinoate + NADH + 2 H(+). The enzyme catalyses (E)-4-hydroxynon-2-enal + NAD(+) + H2O = (E)-4-hydroxynon-2-enoate + NADH + 2 H(+). The catalysed reaction is malonaldehyde + NAD(+) + H2O = 3-oxopropanoate + NADH + 2 H(+). It carries out the reaction hexanal + NAD(+) + H2O = hexanoate + NADH + 2 H(+). It catalyses the reaction propanal + NAD(+) + H2O = propanoate + NADH + 2 H(+). The enzyme catalyses 3-deoxyglucosone + NAD(+) + H2O = 2-dehydro-3-deoxy-D-gluconate + NADH + 2 H(+). The catalysed reaction is acetaldehyde + NAD(+) + H2O = acetate + NADH + 2 H(+). It carries out the reaction benzaldehyde + NAD(+) + H2O = benzoate + NADH + 2 H(+). It catalyses the reaction 4-aminobutanal + NAD(+) + H2O = 4-aminobutanoate + NADH + 2 H(+). Its pathway is cofactor metabolism; retinol metabolism. Cytosolic dehydrogenase that catalyzes the irreversible oxidation of a wide range of aldehydes to their corresponding carboxylic acid. Functions downstream of retinol dehydrogenases and catalyzes the oxidation of retinaldehyde into retinoic acid, the second step in the oxidation of retinol/vitamin A into retinoic acid. This pathway is crucial to control the levels of retinol and retinoic acid, two important molecules which excess can be teratogenic and cytotoxic. Also oxidizes aldehydes resulting from lipid peroxidation like (E)-4-hydroxynon-2-enal/HNE, malonaldehyde and hexanal that form protein adducts and are highly cytotoxic. By participating for instance to the clearance of (E)-4-hydroxynon-2-enal/HNE in the lens epithelium prevents the formation of HNE-protein adducts and lens opacification. Functions also downstream of fructosamine-3-kinase in the fructosamine degradation pathway by catalyzing the oxidation of 3-deoxyglucosone, the carbohydrate product of fructosamine 3-phosphate decomposition, which is itself a potent glycating agent that may react with lysine and arginine side-chains of proteins. Also has an aminobutyraldehyde dehydrogenase activity and is probably part of an alternative pathway for the biosynthesis of GABA/4-aminobutanoate in midbrain, thereby playing a role in GABAergic synaptic transmission. The chain is Aldehyde dehydrogenase 1A1 from Oryctolagus cuniculus (Rabbit).